The following is a 318-amino-acid chain: MLRSTHPPPSSPSSSSSGGGGGGGSSASSSSEKTMVGGGGGGGGGSGSAAPSGAKLLQILNVRVVGSGERVVVLSHGFGTDQSAWSRVLPYLTRDHRVVLYDLVCAGSVNPDHFDFRRYDNLDAYVDDLLAILDALRIPRCAFVGHSVSAMIGILASIRRPDLFAKLVLIGASPRFLNDSDYHGGFELEEIQQVFDAMGANYSAWATGYAPLAVGADVPAAVQEFSRTLFNMRPDISLHVCQTVFKTDLRGVLGMVRAPCVVVQTTRDVSVPASVAAYLKAHLGGRTTVEFLQTEGHLPHLSAPSLLAQVLRRALARY.

The span at 1 to 11 shows a compositional bias: pro residues; the sequence is MLRSTHPPPSS. A disordered region spans residues 1 to 48; the sequence is MLRSTHPPPSSPSSSSSGGGGGGGSSASSSSEKTMVGGGGGGGGGSGS. The segment covering 36 to 47 has biased composition (gly residues); the sequence is VGGGGGGGGGSG. The active-site Nucleophile is Ser-147. 2 residues coordinate substrate: Ser-147 and Cys-241. Residues Asp-268 and His-297 contribute to the active site. Substrate is bound at residue His-297.

This sequence belongs to the AB hydrolase superfamily. Interacts with D53. The interaction between D53 and D14 is enhanced in the presence of strigolactones. The interaction with D53 occurs in the presence of (2'R) stereoisomers of strigolactones, but not (2'S) stereoisomers. Interacts with SLR1 in a strigolactone-dependent manner. Interacts with D3 in a strigolactone-dependent manner. As to expression, expressed in the parenchyma cells of the root stele and lateral roots, vascular tissues of vein and leaf sheath, ligule base, auricle base and stem base.

It localises to the cytoplasm. The protein localises to the nucleus. In terms of biological role, involved in strigolactone (SL) signaling pathway. May function downstream of SL synthesis, as a component of hormone signaling or as an enzyme that participates in the conversion of SL to the bioactive form. Strigolactones are hormones that inhibit tillering and shoot branching through the MAX-dependent pathway, contribute to the regulation of shoot architectural response to phosphate-limiting conditions and function as rhizosphere signal that stimulates hyphal branching of arbuscular mycorrhizal fungi and trigger seed germination of root parasitic weeds. Strigolactone-dependent association of D14 with D3 and D53 (a repressor of SL signaling) triggers D53 ubiquitination and degradation. Hydrolyzes the butenolide ring of SLs. A reaction product D-OH is trapped in the cavity of D14, inducing the interaction with SLR1, and probably with other proteins such as D3 and D53. Contributes to the negative regulation of gibberellin signaling. The chain is Strigolactone esterase D14 from Oryza sativa subsp. japonica (Rice).